The chain runs to 208 residues: CASP-like protein 1D1 (208 aa).

Residues 1-36 form a disordered region; it reads MSSVDTEKPAPPPLETEAPPPPPPPPPPPPPPPPPP. Residues 1–41 are Cytoplasmic-facing; it reads MSSVDTEKPAPPPLETEAPPPPPPPPPPPPPPPPPPAGYSA. Residues 9 to 36 show a composition bias toward pro residues; the sequence is PAPPPLETEAPPPPPPPPPPPPPPPPPP. The chain crosses the membrane as a helical span at residues 42–62; that stretch reads LDVVLRILLLGSAVASVVVMV. Residues 63-89 are Extracellular-facing; it reads TSVQTKLIAVAGVPVLVSNKAKFQNSP. The chain crosses the membrane as a helical span at residues 90–110; the sequence is AFIYFVAALSVVGLYSIITTL. Topologically, residues 111 to 133 are cytoplasmic; the sequence is ASFIFISKPSCSTKTILHLAIWD. A helical membrane pass occupies residues 134–154; it reads VLMLGLAASATGTAGGVAYVG. Over 155–180 the chain is Extracellular; the sequence is LKGNSHVGWNKVCNTYDKFCRHVGGS. The helical transmembrane segment at 181-201 threads the bilayer; sequence IAVALFASILLVLLVWLSLFT. Residues 202-208 lie on the Cytoplasmic side of the membrane; the sequence is LYSRIRK.

The protein belongs to the Casparian strip membrane proteins (CASP) family. As to quaternary structure, homodimer and heterodimers.

It is found in the cell membrane. The chain is CASP-like protein 1D1 from Vitis vinifera (Grape).